The sequence spans 703 residues: MDLSLHVALCLGMLALCLAMPPKEKQVRWCAKSKSEFSKCRDLVNTCKNKEITLSCVEKSSTDECLTAIQNDRADAICVDGGDVYKGSLQPYNLKPIMAENYGSHTEPDTCYYAVAVVKKSSTFTFDELRDKRSCHTGIGKTAGWNVIIGLLLEKQLLKWEGPDTESLEKAVSKFFKASCVPGAKEPKLCQQCAGKKEHKCARSNNEPYYNYAGAFKCLQDDKGDVAFVKHSTVPEELHKDYELLCPDNTRKPISDYKNCNLAKVPAHSVLARARDDKSKDIIAFLQEAQKTKECKLFSSQHGKDLLFKDTAVSLVPLPPTIDGFLFLGAVYYQEIHALKEGVKEDDLAAPSKVRWCTQSKAEKTKCDDWTTISGGSIECTEAATAEDCILQILKGDADAVTLDGGYMYTAGQCGLVPVMGEYYDLDDLTPCQRRSSQAKGVYYAVAIAKKGTKVSWKNLRGVKTCHTAVGRTAGWNIPVGLITNETNNCDFASYVGESCAPGSDVKSNLCKLCIGDPAKPLDSAKKCSPSASEAYHGYSGAFRCLVEKGDVCFAKHTTVFENTDGKNPAAWAKDLKSDDYELLCPDGSRAPINDFKRCNLAEVPAHSVVTLPGKRKPVVEILVNQQSLYGRKGFQKDIFQMFQSKDGKDLLFKDSTQCLLEISEKTTMQEFLGDKYYTAVTSLNKCSNTKSGLLSSCTFHSC.

The first 19 residues, 1-19 (MDLSLHVALCLGMLALCLA), serve as a signal peptide directing secretion. Transferrin-like domains are found at residues 27 to 341 (VRWC…ALKE) and 354 to 686 (VRWC…SLNK). Disulfide bonds link Cys30-Cys65 and Cys40-Cys56. Positions 80 and 112 each coordinate Fe(3+). Disulfide bonds link Cys135/Cys218, Cys180/Cys193, and Cys246/Cys260. Positions 137, 141, 143, and 144 each coordinate hydrogencarbonate. Residue Tyr212 coordinates Fe(3+). His268 contributes to the Fe(3+) binding site. The interval 341 to 350 (EGVKEDDLAA) is connecting region. 2 disulfide bridges follow: Cys357-Cys389 and Cys367-Cys380. 2 residues coordinate Fe(3+): Asp404 and Tyr443. 7 cysteine pairs are disulfide-bonded: Cys414/Cys698, Cys432/Cys659, Cys466/Cys545, Cys490/Cys687, Cys500/Cys514, Cys511/Cys528, and Cys585/Cys599. Positions 468, 472, 474, and 475 each coordinate hydrogencarbonate. Fe(3+) is bound at residue Tyr539. His607 is a Fe(3+) binding site.

This sequence belongs to the transferrin family. As to quaternary structure, monomer. As to expression, plasma.

Its subcellular location is the secreted. In terms of biological role, transferrins are iron binding transport proteins which can bind two Fe(3+) ions in association with the binding of an anion, usually bicarbonate. It is responsible for the transport of iron from sites of absorption and heme degradation to those of storage and utilization. Serum transferrin may also have a further role in stimulating cell proliferation. The sequence is that of Serotransferrin (tf) from Xenopus tropicalis (Western clawed frog).